The sequence spans 221 residues: Transmembrane emp24 domain-containing protein 3 (221 aa).

Residues M1–A25 form the signal peptide. Topologically, residues L28–S184 are lumenal. One can recognise a GOLD domain in the interval K42–V124. R103 is modified (dimethylated arginine). A helical transmembrane segment spans residues Y185–L205. Over K206–S221 the chain is Cytoplasmic. Residues F208 to F209 carry the COPII vesicle coat-binding motif. The short motif at F208–S221 is the COPI vesicle coat-binding element.

This sequence belongs to the EMP24/GP25L family. As to quaternary structure, monomer in endoplasmic reticulum, endoplasmic reticulum-Golgi intermediate compartment and cis-Golgi network. Interacts (via C-terminus) with COPG1; the interaction involves dimeric TMED3; however, there are conflicting reports on the interaction. Interacts with GORASP1 and GORASP2.

It is found in the endoplasmic reticulum-Golgi intermediate compartment membrane. It localises to the golgi apparatus. Its subcellular location is the cis-Golgi network membrane. The protein localises to the golgi stack membrane. The protein resides in the endoplasmic reticulum membrane. It is found in the cytoplasmic vesicle. It localises to the COPI-coated vesicle membrane. In terms of biological role, potential role in vesicular protein trafficking, mainly in the early secretory pathway. Contributes to the coupled localization of TMED2 and TMED10 in the cis-Golgi network. This Mus musculus (Mouse) protein is Transmembrane emp24 domain-containing protein 3 (Tmed3).